Consider the following 346-residue polypeptide: MTGIVGYGAHIPSYRIKVEEIAKVWGDDPKSISKGLVVNQKSVPGPDEDTITISVEAARRALQRAEIDPQDIGAIYVGSESHPYAVKPTATIVADAIRASPNLTAADLEFACKAGTAGIQAAVGLVKSGMIKYGLAIGADTSQGAPGDALEYTASAGGAAYIIGEDNTIADIEHTCSFTTDTPDFYRREGQAYPSHGGRFTGQPAYFKHVLGAANRMLEETGTTAKDYDYAVFHQPNGKFYIRVARKLGFTEDQYKQGLLTPNIGNTYSGATPLGLASILDIAKPGDKIFAVSYGSGAGSDAFKITVNDRIEEVRNNAKTLEEIQSKITYVDYATYAKFKGKIKMN.

Residue Asp28 coordinates (3S)-3-hydroxy-3-methylglutaryl-CoA. Glu80 functions as the Proton donor/acceptor in the catalytic mechanism. (3S)-3-hydroxy-3-methylglutaryl-CoA-binding residues include Cys112 and Thr153. Cys112 (acyl-thioester intermediate) is an active-site residue. Arg199 lines the CoA pocket. (3S)-3-hydroxy-3-methylglutaryl-CoA contacts are provided by Thr201 and His234. His234 (proton donor/acceptor) is an active-site residue. Position 239 (Lys239) interacts with CoA. Positions 243, 266, and 296 each coordinate (3S)-3-hydroxy-3-methylglutaryl-CoA.

The protein belongs to the thiolase-like superfamily. Archaeal HMG-CoA synthase family. Interacts with acetoacetyl-CoA thiolase that catalyzes the precedent step in the pathway and with a DUF35 protein. The acetoacetyl-CoA thiolase/HMG-CoA synthase complex channels the intermediate via a fused CoA-binding site, which allows for efficient coupling of the endergonic thiolase reaction with the exergonic HMGCS reaction.

It carries out the reaction acetoacetyl-CoA + acetyl-CoA + H2O = (3S)-3-hydroxy-3-methylglutaryl-CoA + CoA + H(+). It participates in metabolic intermediate biosynthesis; (R)-mevalonate biosynthesis; (R)-mevalonate from acetyl-CoA: step 2/3. Functionally, catalyzes the condensation of acetyl-CoA with acetoacetyl-CoA to form 3-hydroxy-3-methylglutaryl-CoA (HMG-CoA). Functions in the mevalonate (MVA) pathway leading to isopentenyl diphosphate (IPP), a key precursor for the biosynthesis of isoprenoid compounds that are building blocks of archaeal membrane lipids. This Methanosphaera stadtmanae (strain ATCC 43021 / DSM 3091 / JCM 11832 / MCB-3) protein is Hydroxymethylglutaryl-CoA synthase.